Here is a 436-residue protein sequence, read N- to C-terminus: Trigger factor (436 aa).

Positions 163–248 (DDRIVLDFAG…VKEVAEAVLP (86 aa)) constitute a PPIase FKBP-type domain.

This sequence belongs to the FKBP-type PPIase family. Tig subfamily.

The protein localises to the cytoplasm. The catalysed reaction is [protein]-peptidylproline (omega=180) = [protein]-peptidylproline (omega=0). Its function is as follows. Involved in protein export. Acts as a chaperone by maintaining the newly synthesized protein in an open conformation. Functions as a peptidyl-prolyl cis-trans isomerase. In Bordetella avium (strain 197N), this protein is Trigger factor.